Here is a 105-residue protein sequence, read N- to C-terminus: Cuticle protein AMP1B (105 aa).

The interval 1–21 (DRDAQTLTDERSDQGDGNFRY) is disordered. In terms of domain architecture, Chitin-binding type R&amp;R spans 16–81 (DGNFRYEFET…PSSDLLPVPP (66 aa)).

In terms of tissue distribution, arthrodial membrane.

The chain is Cuticle protein AMP1B from Homarus americanus (American lobster).